Reading from the N-terminus, the 126-residue chain is Large ribosomal subunit protein bL19 (126 aa).

This sequence belongs to the bacterial ribosomal protein bL19 family.

Functionally, this protein is located at the 30S-50S ribosomal subunit interface and may play a role in the structure and function of the aminoacyl-tRNA binding site. This Thiobacillus denitrificans (strain ATCC 25259 / T1) protein is Large ribosomal subunit protein bL19.